Here is a 1773-residue protein sequence, read N- to C-terminus: Disco-interacting protein 2 (1773 aa).

One can recognise a DMAP1-binding domain in the interval H3–H110. Y60 and Y61 each carry phosphotyrosine. Disordered stretches follow at residues Q112 to E185 and L198 to S319. Polar residues-rich tracts occupy residues A113 to N125 and Y146 to Q165. The span at H166–V175 shows a compositional bias: basic residues. The segment covering T176–E185 has biased composition (basic and acidic residues). A compositionally biased stretch (acidic residues) spans D224–P236. Basic and acidic residues predominate over residues S241–I253. Over residues S272–N297 the composition is skewed to polar residues.

The protein belongs to the DIP2 family. As to quaternary structure, interacts with Disco. In terms of tissue distribution, expressed in the developing nervous system. Ubiquitously expressed in the developing brain. Within the mushroom body, a higher level is detected in the core of lobes and peduncle in the late third instar larva. Detected in whole mushroom body neuron structures at 48 hours after puparium formation and during later stages.

The protein resides in the cell membrane. Functionally, required for precise axonal bifurcation in mushroom body neurons by suppressing ectopic bifurcation and regulating the guidance of sister axons. May function by regulating expression of tdp1. Acts downstream of the serine/threonine-protein kinase Bsk to modulate the direction of axon projection. May play a role in fatty acid metabolism. The protein is Disco-interacting protein 2 of Drosophila melanogaster (Fruit fly).